The following is a 98-amino-acid chain: NADH-ubiquinone oxidoreductase chain 4L (98 aa).

Helical transmembrane passes span 1-21 (MPPIYMNIILAFTLSLMGMLV), 29-49 (SLLCLEGMMLSLFILGTTMAL), and 61-81 (IVLLVFAACEAAVGLSLLVMV).

This sequence belongs to the complex I subunit 4L family. Core subunit of respiratory chain NADH dehydrogenase (Complex I) which is composed of 45 different subunits.

The protein localises to the mitochondrion inner membrane. The catalysed reaction is a ubiquinone + NADH + 5 H(+)(in) = a ubiquinol + NAD(+) + 4 H(+)(out). Functionally, core subunit of the mitochondrial membrane respiratory chain NADH dehydrogenase (Complex I) which catalyzes electron transfer from NADH through the respiratory chain, using ubiquinone as an electron acceptor. Part of the enzyme membrane arm which is embedded in the lipid bilayer and involved in proton translocation. This chain is NADH-ubiquinone oxidoreductase chain 4L (MT-ND4L), found in Orycteropus afer (Aardvark).